Here is a 201-residue protein sequence, read N- to C-terminus: Small ribosomal subunit protein uS4 (201 aa).

Residues 93 to 156 enclose the S4 RNA-binding domain; that stretch reads RRLDNMVYRL…KNLDIIKNAV (64 aa).

It belongs to the universal ribosomal protein uS4 family. Part of the 30S ribosomal subunit. Contacts protein S5. The interaction surface between S4 and S5 is involved in control of translational fidelity.

In terms of biological role, one of the primary rRNA binding proteins, it binds directly to 16S rRNA where it nucleates assembly of the body of the 30S subunit. Its function is as follows. With S5 and S12 plays an important role in translational accuracy. In Limosilactobacillus reuteri subsp. reuteri (strain JCM 1112) (Lactobacillus reuteri), this protein is Small ribosomal subunit protein uS4.